Consider the following 1214-residue polypeptide: ATP-dependent helicase/nuclease subunit A (1214 aa).

In terms of domain architecture, UvrD-like helicase ATP-binding spans 27–483 (HKRTAQQIEA…ILLKENFRSQ (457 aa)). Residue 48 to 55 (ASAGSGKT) participates in ATP binding. In terms of domain architecture, UvrD-like helicase C-terminal spans 512-800 (QLVAGSEAQK…NLMTIHKSKG (289 aa)).

Belongs to the helicase family. AddA subfamily. In terms of assembly, heterodimer of AddA and AddB/RexB. It depends on Mg(2+) as a cofactor.

The catalysed reaction is Couples ATP hydrolysis with the unwinding of duplex DNA by translocating in the 3'-5' direction.. It catalyses the reaction ATP + H2O = ADP + phosphate + H(+). The heterodimer acts as both an ATP-dependent DNA helicase and an ATP-dependent, dual-direction single-stranded exonuclease. Recognizes the chi site generating a DNA molecule suitable for the initiation of homologous recombination. The AddA nuclease domain is required for chi fragment generation; this subunit has the helicase and 3' -&gt; 5' nuclease activities. The chain is ATP-dependent helicase/nuclease subunit A from Streptococcus equi subsp. zooepidemicus (strain MGCS10565).